Here is a 74-residue protein sequence, read N- to C-terminus: U3-agatoxin-Ao1d (74 aa).

The N-terminal stretch at 1–20 (MKAAISLLLLSALLFVVIEA) is a signal peptide. Residues 21-34 (ITYEEGKELFQGER) constitute a propeptide that is removed on maturation. 4 disulfide bridges follow: Cys-37-Cys-53, Cys-44-Cys-58, Cys-52-Cys-68, and Cys-60-Cys-66. The residue at position 72 (Ser-72) is a Serine amide.

Belongs to the neurotoxin 07 (Beta/delta-agtx) family. 02 (aga-3) subfamily. As to expression, expressed by the venom gland.

Its subcellular location is the secreted. Insecticidal neurotoxin that induces an irreversible spastic paralysis when injected into insects. Modifies presynaptic voltage-gated sodium channels (Nav), causing them to open at the normal resting potential of the nerve. This leads to spontaneous release of neurotransmitter and repetitive action potentials in motor neurons. In Agelena orientalis (Funnel-web spider), this protein is U3-agatoxin-Ao1d.